The sequence spans 198 residues: Riboflavin synthase (198 aa).

Lumazine-binding repeat units lie at residues 1-95 (MFSG…IGGH) and 96-188 (FVSG…VDTV). 2,4-dihydroxypteridine is bound by residues 4–6 (GII), 46–48 (CLT), 60–65 (DVTEET), 99–101 (GHV), lysine 130, 139–141 (SLT), and 153–158 (SVIPET).

As to quaternary structure, homotrimer.

It catalyses the reaction 2 6,7-dimethyl-8-(1-D-ribityl)lumazine + H(+) = 5-amino-6-(D-ribitylamino)uracil + riboflavin. It participates in cofactor biosynthesis; riboflavin biosynthesis; riboflavin from 2-hydroxy-3-oxobutyl phosphate and 5-amino-6-(D-ribitylamino)uracil: step 2/2. Its function is as follows. Catalyzes the dismutation of two molecules of 6,7-dimethyl-8-ribityllumazine, resulting in the formation of riboflavin and 5-amino-6-(D-ribitylamino)uracil. This chain is Riboflavin synthase (ribE), found in Chlamydia muridarum (strain MoPn / Nigg).